Here is a 112-residue protein sequence, read N- to C-terminus: T cell receptor alpha variable 17 (112 aa).

An N-terminal signal peptide occupies residues 1–21; it reads METLLGVSLVILWLQLARVNS. The region spanning 22–112 is the Ig-like domain; it reads QQGEEDPQAL…DTASYFCATD (91 aa). Asn38 and Asn42 each carry an N-linked (GlcNAc...) asparagine glycan. Cys43 and Cys109 are disulfide-bonded.

Alpha-beta TR is a heterodimer composed of an alpha and beta chain; disulfide-linked. The alpha-beta TR is associated with the transmembrane signaling CD3 coreceptor proteins to form the TR-CD3 (TcR or TCR). The assembly of alpha-beta TR heterodimers with CD3 occurs in the endoplasmic reticulum where a single alpha-beta TR heterodimer associates with one CD3D-CD3E heterodimer, one CD3G-CD3E heterodimer and one CD247 homodimer forming a stable octameric structure. CD3D-CD3E and CD3G-CD3E heterodimers preferentially associate with TR alpha and TR beta chains, respectively. The association of the CD247 homodimer is the last step of TcR assembly in the endoplasmic reticulum and is required for transport to the cell surface.

The protein resides in the cell membrane. Functionally, v region of the variable domain of T cell receptor (TR) alpha chain that participates in the antigen recognition. Alpha-beta T cell receptors are antigen specific receptors which are essential to the immune response and are present on the cell surface of T lymphocytes. Recognize peptide-major histocompatibility (MH) (pMH) complexes that are displayed by antigen presenting cells (APC), a prerequisite for efficient T cell adaptive immunity against pathogens. Binding of alpha-beta TR to pMH complex initiates TR-CD3 clustering on the cell surface and intracellular activation of LCK that phosphorylates the ITAM motifs of CD3G, CD3D, CD3E and CD247 enabling the recruitment of ZAP70. In turn ZAP70 phosphorylates LAT, which recruits numerous signaling molecules to form the LAT signalosome. The LAT signalosome propagates signal branching to three major signaling pathways, the calcium, the mitogen-activated protein kinase (MAPK) kinase and the nuclear factor NF-kappa-B (NF-kB) pathways, leading to the mobilization of transcription factors that are critical for gene expression and essential for T cell growth and differentiation. The T cell repertoire is generated in the thymus, by V-(D)-J rearrangement. This repertoire is then shaped by intrathymic selection events to generate a peripheral T cell pool of self-MH restricted, non-autoaggressive T cells. Post-thymic interaction of alpha-beta TR with the pMH complexes shapes TR structural and functional avidity. In Homo sapiens (Human), this protein is T cell receptor alpha variable 17.